The primary structure comprises 147 residues: Large ribosomal subunit protein uL15 (147 aa).

A compositionally biased stretch (basic and acidic residues) spans 1–13 (MKLENLKSKEGSR). A disordered region spans residues 1-54 (MKLENLKSKEGSRHKTKRVGRGFGSGIGKTSTRGSKGQKSRKSGHTRPGFEGGQ). The segment covering 36–45 (KGQKSRKSGH) has biased composition (basic residues).

The protein belongs to the universal ribosomal protein uL15 family. Part of the 50S ribosomal subunit.

Its function is as follows. Binds to the 23S rRNA. The chain is Large ribosomal subunit protein uL15 from Malacoplasma penetrans (strain HF-2) (Mycoplasma penetrans).